Reading from the N-terminus, the 119-residue chain is Membrane-anchored ubiquitin-fold protein 3 (119 aa).

In terms of domain architecture, Ubiquitin-like spans 8 to 76 (IEVKFRLFDG…NNRTLAESRV (69 aa)). Cys-116 is modified (cysteine methyl ester). The S-geranylgeranyl cysteine moiety is linked to residue Cys-116. Residues 117–119 (TIL) constitute a propeptide, removed in mature form.

It is found in the cell membrane. Functionally, may serve as docking site to facilitate the association of other proteins to the plasma membrane. This Oryza sativa subsp. japonica (Rice) protein is Membrane-anchored ubiquitin-fold protein 3 (MUB3).